The primary structure comprises 693 residues: Serine/threonine-protein kinase Pkn1 (693 aa).

The Protein kinase domain occupies 59-328 (FRLVRRLGRG…QVALAEHVRV (270 aa)). ATP contacts are provided by residues 65–73 (LGRGGMGAV) and Lys-88. The active-site Proton acceptor is the Asp-180. In terms of domain architecture, PilZ spans 393–491 (LVEVPVQVVL…LKAAVDALLQ (99 aa)). One copy of the TPR repeat lies at 630–663 (ARSHFQSGGALERDGQLSQALDQYERGLKLAPLE).

This sequence belongs to the protein kinase superfamily. Ser/Thr protein kinase family. Post-translationally, autophosphorylated.

The catalysed reaction is L-seryl-[protein] + ATP = O-phospho-L-seryl-[protein] + ADP + H(+). It carries out the reaction L-threonyl-[protein] + ATP = O-phospho-L-threonyl-[protein] + ADP + H(+). May be regulated by calcium or a calmodulin-like protein. In terms of biological role, plays an essential role in proper timing of early development events. The polypeptide is Serine/threonine-protein kinase Pkn1 (pkn1) (Myxococcus xanthus).